The following is a 700-amino-acid chain: Protein kinase C, eye isozyme (700 aa).

2 Phorbol-ester/DAG-type zinc fingers span residues 71 to 121 and 136 to 186; these read GHRF…VFKC and KHGW…PPMC. One can recognise a C2 domain in the interval 189 to 310; sequence DISEVRGKLL…LQKEPVDGWY (122 aa). The Ca(2+) site is built by aspartate 222, aspartate 228, aspartate 281, aspartate 283, serine 286, and aspartate 289. Residues 371–629 enclose the Protein kinase domain; it reads FNFVKVIGKG…RQEITTHPFF (259 aa). Residues 377 to 385 and lysine 400 each bind ATP; that span reads IGKGSFGKV. The Proton acceptor role is filled by aspartate 495. Residues 630–700 form the AGC-kinase C-terminal domain; the sequence is RNVDWDKAEA…FMNPEFITII (71 aa).

It belongs to the protein kinase superfamily. AGC Ser/Thr protein kinase family. PKC subfamily. The cofactor is Ca(2+). Exclusively expressed in photoreceptor cells.

The enzyme catalyses L-seryl-[protein] + ATP = O-phospho-L-seryl-[protein] + ADP + H(+). It catalyses the reaction L-threonyl-[protein] + ATP = O-phospho-L-threonyl-[protein] + ADP + H(+). In terms of biological role, this is a calcium-activated, phospholipid-dependent, serine- and threonine-specific enzyme. This isozyme is a negative regulator of the visual transduction cascade and has been shown to be required for photoreceptor cell inactivation and light adaptation. Negative regulation is dependent on interaction with scaffolding protein inaD. Acts in a hh-signaling pathway which regulates the Duox-dependent gut immune response to bacterial uracil; required for the activation of Cad99C and consequently Cad99C-dependent endosome formation, which is essential for the Duox-dependent production of reactive oxygen species (ROS) in response to intestinal bacterial infection. In Drosophila melanogaster (Fruit fly), this protein is Protein kinase C, eye isozyme (inaC).